The sequence spans 209 residues: ATP-dependent Clp protease proteolytic subunit (209 aa).

Ser-106 functions as the Nucleophile in the catalytic mechanism. His-131 is an active-site residue.

Belongs to the peptidase S14 family. As to quaternary structure, fourteen ClpP subunits assemble into 2 heptameric rings which stack back to back to give a disk-like structure with a central cavity, resembling the structure of eukaryotic proteasomes.

Its subcellular location is the cytoplasm. The catalysed reaction is Hydrolysis of proteins to small peptides in the presence of ATP and magnesium. alpha-casein is the usual test substrate. In the absence of ATP, only oligopeptides shorter than five residues are hydrolyzed (such as succinyl-Leu-Tyr-|-NHMec, and Leu-Tyr-Leu-|-Tyr-Trp, in which cleavage of the -Tyr-|-Leu- and -Tyr-|-Trp bonds also occurs).. In terms of biological role, cleaves peptides in various proteins in a process that requires ATP hydrolysis. Has a chymotrypsin-like activity. Plays a major role in the degradation of misfolded proteins. The protein is ATP-dependent Clp protease proteolytic subunit of Brucella suis biovar 1 (strain 1330).